We begin with the raw amino-acid sequence, 333 residues long: Protein-methionine-sulfoxide reductase catalytic subunit MsrP (333 aa).

The segment at residues 1-43 is a signal peptide (tat-type signal); it reads MSKQRKLTEADVTPESVFYQRRKVLQALGITAASLALPHNAQA. Mo-molybdopterin-binding positions include Asn-87, 90 to 91, Cys-145, Thr-180, Asn-232, Arg-237, and 248 to 250; these read YE and GIK.

This sequence belongs to the MsrP family. In terms of assembly, heterodimer of a catalytic subunit (MsrP) and a heme-binding subunit (MsrQ). The cofactor is Mo-molybdopterin. In terms of processing, predicted to be exported by the Tat system. The position of the signal peptide cleavage has not been experimentally proven.

Its subcellular location is the periplasm. The enzyme catalyses L-methionyl-[protein] + a quinone + H2O = L-methionyl-(S)-S-oxide-[protein] + a quinol. It catalyses the reaction L-methionyl-[protein] + a quinone + H2O = L-methionyl-(R)-S-oxide-[protein] + a quinol. Functionally, part of the MsrPQ system that repairs oxidized periplasmic proteins containing methionine sulfoxide residues (Met-O), using respiratory chain electrons. Thus protects these proteins from oxidative-stress damage caused by reactive species of oxygen and chlorine generated by the host defense mechanisms. MsrPQ is essential for the maintenance of envelope integrity under bleach stress, rescuing a wide series of structurally unrelated periplasmic proteins from methionine oxidation. The catalytic subunit MsrP is non-stereospecific, being able to reduce both (R-) and (S-) diastereoisomers of methionine sulfoxide. The protein is Protein-methionine-sulfoxide reductase catalytic subunit MsrP of Serratia proteamaculans (strain 568).